The chain runs to 324 residues: tRNA uridine(34) hydroxylase (324 aa).

A Rhodanese domain is found at 127 to 221; the sequence is QQEETIVIDA…YGKDPEVQGE (95 aa). Cys181 acts as the Cysteine persulfide intermediate in catalysis.

Belongs to the TrhO family.

The enzyme catalyses uridine(34) in tRNA + AH2 + O2 = 5-hydroxyuridine(34) in tRNA + A + H2O. Catalyzes oxygen-dependent 5-hydroxyuridine (ho5U) modification at position 34 in tRNAs. The chain is tRNA uridine(34) hydroxylase from Bacillus cytotoxicus (strain DSM 22905 / CIP 110041 / 391-98 / NVH 391-98).